The sequence spans 362 residues: 3-isopropylmalate dehydrogenase (362 aa).

Position 77–88 (77–88) interacts with NAD(+); sequence GPKWGTGSVRPE. Positions 95, 105, 134, and 223 each coordinate substrate. Mg(2+) is bound by residues Asp-223, Asp-248, and Asp-252. Position 287-298 (287-298) interacts with NAD(+); the sequence is GSAPDLPKGKVN.

This sequence belongs to the isocitrate and isopropylmalate dehydrogenases family. As to quaternary structure, homodimer. Requires Mg(2+) as cofactor. Mn(2+) is required as a cofactor.

Its subcellular location is the cytoplasm. The catalysed reaction is (2R,3S)-3-isopropylmalate + NAD(+) = 4-methyl-2-oxopentanoate + CO2 + NADH. It functions in the pathway amino-acid biosynthesis; L-leucine biosynthesis; L-leucine from 3-methyl-2-oxobutanoate: step 3/4. Functionally, catalyzes the oxidation of 3-carboxy-2-hydroxy-4-methylpentanoate (3-isopropylmalate) to 3-carboxy-4-methyl-2-oxopentanoate. The product decarboxylates to 4-methyl-2 oxopentanoate. This Zygosaccharomyces rouxii (strain ATCC 2623 / CBS 732 / NBRC 1130 / NCYC 568 / NRRL Y-229) protein is 3-isopropylmalate dehydrogenase (LEU2).